The sequence spans 307 residues: Putative S-adenosyl-L-methionine-dependent methyltransferase Mflv_5023 (307 aa).

Residues Asp-133 and 162–163 each bind S-adenosyl-L-methionine; that span reads DL. Residues 213 to 234 form a disordered region; it reads SRLAVESVPSQQSADQDEMREK.

It belongs to the UPF0677 family.

Its function is as follows. Exhibits S-adenosyl-L-methionine-dependent methyltransferase activity. The chain is Putative S-adenosyl-L-methionine-dependent methyltransferase Mflv_5023 from Mycolicibacterium gilvum (strain PYR-GCK) (Mycobacterium gilvum (strain PYR-GCK)).